The primary structure comprises 473 residues: Protein nucleotidyltransferase YdiU (473 aa).

Residues glycine 79, glycine 81, arginine 82, lysine 102, aspartate 114, glycine 115, arginine 165, and arginine 172 each coordinate ATP. Aspartate 241 acts as the Proton acceptor in catalysis. Mg(2+) is bound by residues asparagine 242 and aspartate 251. Aspartate 251 provides a ligand contact to ATP.

The protein belongs to the SELO family. Mg(2+) is required as a cofactor. Requires Mn(2+) as cofactor.

It catalyses the reaction L-seryl-[protein] + ATP = 3-O-(5'-adenylyl)-L-seryl-[protein] + diphosphate. The catalysed reaction is L-threonyl-[protein] + ATP = 3-O-(5'-adenylyl)-L-threonyl-[protein] + diphosphate. It carries out the reaction L-tyrosyl-[protein] + ATP = O-(5'-adenylyl)-L-tyrosyl-[protein] + diphosphate. The enzyme catalyses L-histidyl-[protein] + UTP = N(tele)-(5'-uridylyl)-L-histidyl-[protein] + diphosphate. It catalyses the reaction L-seryl-[protein] + UTP = O-(5'-uridylyl)-L-seryl-[protein] + diphosphate. The catalysed reaction is L-tyrosyl-[protein] + UTP = O-(5'-uridylyl)-L-tyrosyl-[protein] + diphosphate. Its function is as follows. Nucleotidyltransferase involved in the post-translational modification of proteins. It can catalyze the addition of adenosine monophosphate (AMP) or uridine monophosphate (UMP) to a protein, resulting in modifications known as AMPylation and UMPylation. This Marinomonas sp. (strain MWYL1) protein is Protein nucleotidyltransferase YdiU.